The primary structure comprises 342 residues: S-adenosyl-L-methionine-dependent tRNA 4-demethylwyosine synthase (342 aa).

The [4Fe-4S] cluster site is built by Cys45, Cys58, Cys71, Cys81, Cys85, and Cys88. The Radical SAM core domain occupies 64–312; that stretch reads YGIHSHRCLQ…VKHLPGYHIE (249 aa).

Belongs to the TYW1 family. Monomer. [4Fe-4S] cluster serves as cofactor.

The protein localises to the cytoplasm. The enzyme catalyses N(1)-methylguanosine(37) in tRNA(Phe) + pyruvate + S-adenosyl-L-methionine = 4-demethylwyosine(37) in tRNA(Phe) + 5'-deoxyadenosine + L-methionine + CO2 + H2O. Component of the wyosine derivatives biosynthesis pathway that catalyzes the condensation of N-methylguanine with 2 carbon atoms from pyruvate to form the tricyclic 4-demethylwyosine (imG-14) on guanosine-37 of tRNA(Phe). The sequence is that of S-adenosyl-L-methionine-dependent tRNA 4-demethylwyosine synthase from Pyrococcus abyssi (strain GE5 / Orsay).